Here is a 308-residue protein sequence, read N- to C-terminus: ATP synthase gamma chain (308 aa).

The protein belongs to the ATPase gamma chain family. F-type ATPases have 2 components, CF(1) - the catalytic core - and CF(0) - the membrane proton channel. CF(1) has five subunits: alpha(3), beta(3), gamma(1), delta(1), epsilon(1). CF(0) has three main subunits: a, b and c.

It localises to the cell inner membrane. Its function is as follows. Produces ATP from ADP in the presence of a proton gradient across the membrane. The gamma chain is believed to be important in regulating ATPase activity and the flow of protons through the CF(0) complex. This Bartonella tribocorum (strain CIP 105476 / IBS 506) protein is ATP synthase gamma chain.